Reading from the N-terminus, the 218-residue chain is Probable septum site-determining protein MinC (218 aa).

This sequence belongs to the MinC family. In terms of assembly, interacts with MinD and FtsZ.

Its function is as follows. Cell division inhibitor that blocks the formation of polar Z ring septums. Rapidly oscillates between the poles of the cell to destabilize FtsZ filaments that have formed before they mature into polar Z rings. Prevents FtsZ polymerization. This Moorella thermoacetica (strain ATCC 39073 / JCM 9320) protein is Probable septum site-determining protein MinC.